The chain runs to 198 residues: Protein C4 (198 aa).

Residues 1–36 (MFNPRHPGGEFFGRKHHRRHAPDGRSSSSSSSSSEC) form a disordered region.

In Giardia intestinalis (Giardia lamblia), this protein is Protein C4 (C4).